A 583-amino-acid chain; its full sequence is Inactive carboxylesterase-like protein VdtD (583 aa).

The first 23 residues, 1 to 23 (MFMTQIVFGIAPTLLKTFSHLTA), serve as a signal peptide directing secretion. Residues Asn84, Asn109, Asn221, Asn265, Asn307, Asn350, Asn388, Asn448, and Asn468 are each glycosylated (N-linked (GlcNAc...) asparagine).

Belongs to the type-B carboxylesterase/lipase family.

Its pathway is secondary metabolite biosynthesis. In terms of biological role, inactive carboxylesterase-like protein; part of the gene cluster that mediates the biosynthesis of viriditoxin, one of the 'classical' secondary metabolites produced by fungi and that has antibacterial activity. The first step is performed by the polyketide synthase VdtA which condenses one acetyl-CoA and 6 malonyl-CoA units to form the heptaketide monomer backbone of viriditoxin. The product of VdtA is then O-methylated on C7 by the O-methyltransferase VdtC. The O-methyl group is important for the stereoselective coupling of the monomers at the final step of viriditoxin biosynthesis. The short-chain dehydrogenase/reductase VdtF then acts as a stereospecific reductase converting the pyrone to dihydropyrone via the reduction of the C3-C4 double bond. The FAD-binding monooxygenase VdtE then converts the ketone group into a methyl-ester group to yield semi-viriditoxin. Finally, the laccase VdtB is involved in dimerization of 2 semi-viriditoxin molecules to yield the final viriditoxin. VdtB is responsible for the regioselective 6,6'-coupling of semi-viriditoxin, which yields (M)-viriditoxin and (P)-viriditoxin at a ratio of 1:2. The non-catalytic carboxylesterase-like protein VdtD affects the stereochemistical outcome of the coupling. The highly reducing polyketide synthase VdtX is not involved in viriditoxin synthesis, but might possibly play a role in the production of additional metabolites not identified yet. The protein is Inactive carboxylesterase-like protein VdtD of Byssochlamys spectabilis (Paecilomyces variotii).